An 83-amino-acid chain; its full sequence is Large ribosomal subunit protein bL27c (83 aa).

Residues 1–21 (MAHKKGAGSTKNGRDSNAKRL) form a disordered region.

Belongs to the bacterial ribosomal protein bL27 family.

It localises to the plastid. The protein resides in the chloroplast. This chain is Large ribosomal subunit protein bL27c, found in Phaeodactylum tricornutum (strain CCAP 1055/1).